We begin with the raw amino-acid sequence, 264 residues long: S-adenosylmethionine decarboxylase proenzyme (264 aa).

Serine 112 (schiff-base intermediate with substrate; via pyruvic acid) is an active-site residue. A Pyruvic acid (Ser); by autocatalysis modification is found at serine 112. Histidine 117 functions as the Proton acceptor; for processing activity in the catalytic mechanism. The Proton donor; for catalytic activity role is filled by cysteine 140.

This sequence belongs to the prokaryotic AdoMetDC family. Type 2 subfamily. Heterooctamer of four alpha and four beta chains arranged as a tetramer of alpha/beta heterodimers. Pyruvate serves as cofactor. In terms of processing, is synthesized initially as an inactive proenzyme. Formation of the active enzyme involves a self-maturation process in which the active site pyruvoyl group is generated from an internal serine residue via an autocatalytic post-translational modification. Two non-identical subunits are generated from the proenzyme in this reaction, and the pyruvate is formed at the N-terminus of the alpha chain, which is derived from the carboxyl end of the proenzyme. The post-translation cleavage follows an unusual pathway, termed non-hydrolytic serinolysis, in which the side chain hydroxyl group of the serine supplies its oxygen atom to form the C-terminus of the beta chain, while the remainder of the serine residue undergoes an oxidative deamination to produce ammonia and the pyruvoyl group blocking the N-terminus of the alpha chain.

It catalyses the reaction S-adenosyl-L-methionine + H(+) = S-adenosyl 3-(methylsulfanyl)propylamine + CO2. The protein operates within amine and polyamine biosynthesis; S-adenosylmethioninamine biosynthesis; S-adenosylmethioninamine from S-adenosyl-L-methionine: step 1/1. Catalyzes the decarboxylation of S-adenosylmethionine to S-adenosylmethioninamine (dcAdoMet), the propylamine donor required for the synthesis of the polyamines spermine and spermidine from the diamine putrescine. This is S-adenosylmethionine decarboxylase proenzyme from Shigella dysenteriae serotype 1 (strain Sd197).